Consider the following 88-residue polypeptide: UPF0297 protein SPCG_0205 (88 aa).

The protein belongs to the UPF0297 family.

The chain is UPF0297 protein SPCG_0205 from Streptococcus pneumoniae (strain CGSP14).